The primary structure comprises 772 residues: Nudix hydrolase 3 (772 aa).

Residues 1-14 (MAEEHFDVLTKSGE) are compositionally biased toward basic and acidic residues. Positions 1 to 25 (MAEEHFDVLTKSGEKTGVSKPRGEV) are disordered. In terms of domain architecture, Nudix hydrolase spans 30–172 (DYHRAVHVWI…DPAYVPYDVN (143 aa)). The short motif at 69–90 (GHISAGDTSLLSAQRELEEELG) is the Nudix box element. Mg(2+) contacts are provided by glutamate 84 and glutamate 88.

The protein belongs to the Nudix hydrolase family. Requires Mg(2+) as cofactor. It depends on Mn(2+) as a cofactor. Expressed in roots, stems and, at lower level, leaves.

Probably mediates the hydrolysis of some nucleoside diphosphate derivatives. The sequence is that of Nudix hydrolase 3 (NUDT3) from Arabidopsis thaliana (Mouse-ear cress).